Reading from the N-terminus, the 161-residue chain is UPF0763 protein Cla_1130 (161 aa).

It belongs to the UPF0763 family.

In Campylobacter lari (strain RM2100 / D67 / ATCC BAA-1060), this protein is UPF0763 protein Cla_1130.